We begin with the raw amino-acid sequence, 667 residues long: Acetolactate synthase 1, chloroplastic (667 aa).

The span at 1 to 35 shows a compositional bias: low complexity; sequence MAAAAPSPSSSAFSKTLSPSSSTSSTLLPRSTFPF. The tract at residues 1–45 is disordered; the sequence is MAAAAPSPSSSAFSKTLSPSSSTSSTLLPRSTFPFPHHPHKTTPP. The transit peptide at 1 to 94 directs the protein to the chloroplast; that stretch reads MAAAAPSPSS…VSRFAPDEPR (94 aa). Glu141 contributes to the thiamine diphosphate binding site. An intrachain disulfide couples Cys161 to Cys307. Residues Arg243, 349–370, and 392–411 contribute to the FAD site; these read HGTV…FGVR and DIDS…ICAD. Residues 484–564 are thiamine pyrophosphate binding; it reads QHQMWAAQYY…VKIMLLNNQH (81 aa). Residues Asp535 and Asn562 each contribute to the Mg(2+) site.

The protein belongs to the TPP enzyme family. It depends on Mg(2+) as a cofactor. Requires thiamine diphosphate as cofactor.

It localises to the plastid. The protein localises to the chloroplast. It catalyses the reaction 2 pyruvate + H(+) = (2S)-2-acetolactate + CO2. It participates in amino-acid biosynthesis; L-isoleucine biosynthesis; L-isoleucine from 2-oxobutanoate: step 1/4. The protein operates within amino-acid biosynthesis; L-valine biosynthesis; L-valine from pyruvate: step 1/4. This chain is Acetolactate synthase 1, chloroplastic (ALS SURA), found in Nicotiana tabacum (Common tobacco).